We begin with the raw amino-acid sequence, 297 residues long: Glycine--tRNA ligase alpha subunit (297 aa).

The protein belongs to the class-II aminoacyl-tRNA synthetase family. In terms of assembly, tetramer of two alpha and two beta subunits.

It is found in the cytoplasm. The enzyme catalyses tRNA(Gly) + glycine + ATP = glycyl-tRNA(Gly) + AMP + diphosphate. The protein is Glycine--tRNA ligase alpha subunit of Sulfurihydrogenibium sp. (strain YO3AOP1).